The following is a 343-amino-acid chain: Phosphate acyltransferase (343 aa).

Belongs to the PlsX family. Homodimer. Probably interacts with PlsY.

Its subcellular location is the cytoplasm. The enzyme catalyses a fatty acyl-[ACP] + phosphate = an acyl phosphate + holo-[ACP]. It functions in the pathway lipid metabolism; phospholipid metabolism. Functionally, catalyzes the reversible formation of acyl-phosphate (acyl-PO(4)) from acyl-[acyl-carrier-protein] (acyl-ACP). This enzyme utilizes acyl-ACP as fatty acyl donor, but not acyl-CoA. The chain is Phosphate acyltransferase from Coxiella burnetii (strain CbuG_Q212) (Coxiella burnetii (strain Q212)).